We begin with the raw amino-acid sequence, 175 residues long: Bifunctional protein PyrR (175 aa).

Residues 97-109 carry the PRPP-binding motif; the sequence is IVLIDDVLFTGRT.

Belongs to the purine/pyrimidine phosphoribosyltransferase family. PyrR subfamily. As to quaternary structure, homodimer and homohexamer; in equilibrium.

It carries out the reaction UMP + diphosphate = 5-phospho-alpha-D-ribose 1-diphosphate + uracil. Functionally, regulates transcriptional attenuation of the pyrimidine nucleotide (pyr) operon by binding in a uridine-dependent manner to specific sites on pyr mRNA. This disrupts an antiterminator hairpin in the RNA and favors formation of a downstream transcription terminator, leading to a reduced expression of downstream genes. In terms of biological role, also displays a weak uracil phosphoribosyltransferase activity which is not physiologically significant. The protein is Bifunctional protein PyrR of Leuconostoc mesenteroides subsp. mesenteroides (strain ATCC 8293 / DSM 20343 / BCRC 11652 / CCM 1803 / JCM 6124 / NCDO 523 / NBRC 100496 / NCIMB 8023 / NCTC 12954 / NRRL B-1118 / 37Y).